Here is a 215-residue protein sequence, read N- to C-terminus: Cytochrome b6 (215 aa).

Residues 32–52 (IFYCLGGITLTCFLIQFATGF) form a helical membrane-spanning segment. C35 provides a ligand contact to heme c. Residues H86 and H100 each coordinate heme b. 3 consecutive transmembrane segments (helical) span residues 90–110 (ASMM…TGGF), 116–136 (LTWV…VTGY), and 186–206 (AHTF…FLMI). Heme b-binding residues include H187 and H202.

Belongs to the cytochrome b family. PetB subfamily. As to quaternary structure, the 4 large subunits of the cytochrome b6-f complex are cytochrome b6, subunit IV (17 kDa polypeptide, PetD), cytochrome f and the Rieske protein, while the 4 small subunits are PetG, PetL, PetM and PetN. The complex functions as a dimer. The cofactor is heme b. It depends on heme c as a cofactor.

The protein localises to the cellular thylakoid membrane. In terms of biological role, component of the cytochrome b6-f complex, which mediates electron transfer between photosystem II (PSII) and photosystem I (PSI), cyclic electron flow around PSI, and state transitions. The polypeptide is Cytochrome b6 (Desmonostoc sp. (strain PCC 7906) (Nostoc sp. (strain PCC 7906))).